Reading from the N-terminus, the 286-residue chain is Thymidylate synthase (286 aa).

Residue Arg-140–Arg-141 coordinates dUMP. Residue Cys-161 is the Nucleophile of the active site. DUMP contacts are provided by residues Arg-185–Asp-188, Asn-196, and His-226–Tyr-228. Residue Asp-188 participates in (6R)-5,10-methylene-5,6,7,8-tetrahydrofolate binding. Position 285 (Ala-285) interacts with (6R)-5,10-methylene-5,6,7,8-tetrahydrofolate.

It belongs to the thymidylate synthase family. Bacterial-type ThyA subfamily. Homodimer.

Its subcellular location is the cytoplasm. It carries out the reaction dUMP + (6R)-5,10-methylene-5,6,7,8-tetrahydrofolate = 7,8-dihydrofolate + dTMP. It participates in pyrimidine metabolism; dTTP biosynthesis. In terms of biological role, catalyzes the reductive methylation of 2'-deoxyuridine-5'-monophosphate (dUMP) to 2'-deoxythymidine-5'-monophosphate (dTMP) while utilizing 5,10-methylenetetrahydrofolate (mTHF) as the methyl donor and reductant in the reaction, yielding dihydrofolate (DHF) as a by-product. This enzymatic reaction provides an intracellular de novo source of dTMP, an essential precursor for DNA biosynthesis. The sequence is that of Thymidylate synthase from Streptococcus thermophilus (strain CNRZ 1066).